The primary structure comprises 901 residues: Protein translocase subunit SecA (901 aa).

ATP contacts are provided by residues Gln-87, Gly-105–Thr-109, and Asp-512. Residues Gln-853–Ser-901 are disordered. Residues Cys-885, Cys-887, Cys-896, and His-897 each contribute to the Zn(2+) site. Over residues Lys-891–Ser-901 the composition is skewed to basic residues.

This sequence belongs to the SecA family. In terms of assembly, monomer and homodimer. Part of the essential Sec protein translocation apparatus which comprises SecA, SecYEG and auxiliary proteins SecDF-YajC and YidC. Requires Zn(2+) as cofactor.

Its subcellular location is the cell inner membrane. The protein localises to the cytoplasm. It carries out the reaction ATP + H2O + cellular proteinSide 1 = ADP + phosphate + cellular proteinSide 2.. Its function is as follows. Part of the Sec protein translocase complex. Interacts with the SecYEG preprotein conducting channel. Has a central role in coupling the hydrolysis of ATP to the transfer of proteins into and across the cell membrane, serving both as a receptor for the preprotein-SecB complex and as an ATP-driven molecular motor driving the stepwise translocation of polypeptide chains across the membrane. This is Protein translocase subunit SecA from Enterobacter sp. (strain 638).